A 227-amino-acid chain; its full sequence is MAHPVQLGFQDAASPIMEELLYFHDHTLMIMFLISSLVLYIISLMLTTKLTHTSTMDAQEVETVWTILPAAILILIALPSLRILYMMDEITSPSLTLKTMGHQWYWSYEYTDYENLCFDSYMTPCSDLKPGELRLLEVDNRVVLPTELSIRTLISSEDVLHSWTVPSLGVKTDAIPGRLNQATLMASRPGVYYGQCSEICGANHSFMPIVLELIPLKHFEEWLLFTL.

The Mitochondrial intermembrane segment spans residues 1–14; that stretch reads MAHPVQLGFQDAAS. Residues 15–45 traverse the membrane as a helical segment; sequence PIMEELLYFHDHTLMIMFLISSLVLYIISLM. The Mitochondrial matrix portion of the chain corresponds to 46 to 59; that stretch reads LTTKLTHTSTMDAQ. The helical transmembrane segment at 60 to 87 threads the bilayer; it reads EVETVWTILPAAILILIALPSLRILYMM. Residues 88–227 are Mitochondrial intermembrane-facing; the sequence is DEITSPSLTL…HFEEWLLFTL (140 aa). Histidine 161, cysteine 196, glutamate 198, cysteine 200, histidine 204, and methionine 207 together coordinate Cu cation. Glutamate 198 is a binding site for Mg(2+).

This sequence belongs to the cytochrome c oxidase subunit 2 family. As to quaternary structure, component of the cytochrome c oxidase (complex IV, CIV), a multisubunit enzyme composed of 14 subunits. The complex is composed of a catalytic core of 3 subunits MT-CO1, MT-CO2 and MT-CO3, encoded in the mitochondrial DNA, and 11 supernumerary subunits COX4I, COX5A, COX5B, COX6A, COX6B, COX6C, COX7A, COX7B, COX7C, COX8 and NDUFA4, which are encoded in the nuclear genome. The complex exists as a monomer or a dimer and forms supercomplexes (SCs) in the inner mitochondrial membrane with NADH-ubiquinone oxidoreductase (complex I, CI) and ubiquinol-cytochrome c oxidoreductase (cytochrome b-c1 complex, complex III, CIII), resulting in different assemblies (supercomplex SCI(1)III(2)IV(1) and megacomplex MCI(2)III(2)IV(2)). Found in a complex with TMEM177, COA6, COX18, COX20, SCO1 and SCO2. Interacts with TMEM177 in a COX20-dependent manner. Interacts with COX20. Interacts with COX16. Cu cation is required as a cofactor.

It is found in the mitochondrion inner membrane. The enzyme catalyses 4 Fe(II)-[cytochrome c] + O2 + 8 H(+)(in) = 4 Fe(III)-[cytochrome c] + 2 H2O + 4 H(+)(out). Its function is as follows. Component of the cytochrome c oxidase, the last enzyme in the mitochondrial electron transport chain which drives oxidative phosphorylation. The respiratory chain contains 3 multisubunit complexes succinate dehydrogenase (complex II, CII), ubiquinol-cytochrome c oxidoreductase (cytochrome b-c1 complex, complex III, CIII) and cytochrome c oxidase (complex IV, CIV), that cooperate to transfer electrons derived from NADH and succinate to molecular oxygen, creating an electrochemical gradient over the inner membrane that drives transmembrane transport and the ATP synthase. Cytochrome c oxidase is the component of the respiratory chain that catalyzes the reduction of oxygen to water. Electrons originating from reduced cytochrome c in the intermembrane space (IMS) are transferred via the dinuclear copper A center (CU(A)) of subunit 2 and heme A of subunit 1 to the active site in subunit 1, a binuclear center (BNC) formed by heme A3 and copper B (CU(B)). The BNC reduces molecular oxygen to 2 water molecules using 4 electrons from cytochrome c in the IMS and 4 protons from the mitochondrial matrix. The polypeptide is Cytochrome c oxidase subunit 2 (MT-CO2) (Varecia variegata (Black-and-white ruffed lemur)).